Consider the following 122-residue polypeptide: uncharacterized protein (122 aa).

It is found in the plastid. This is an uncharacterized protein from Euglena longa (Euglenophycean alga).